Consider the following 598-residue polypeptide: Elongation factor 4 (598 aa).

The tr-type G domain maps to 4 to 186 (SRLRNFSIIA…EIVKKIPPPK (183 aa)). Residues 16–21 (DHGKST) and 133–136 (NKID) contribute to the GTP site.

The protein belongs to the TRAFAC class translation factor GTPase superfamily. Classic translation factor GTPase family. LepA subfamily.

It is found in the cell inner membrane. It catalyses the reaction GTP + H2O = GDP + phosphate + H(+). In terms of biological role, required for accurate and efficient protein synthesis under certain stress conditions. May act as a fidelity factor of the translation reaction, by catalyzing a one-codon backward translocation of tRNAs on improperly translocated ribosomes. Back-translocation proceeds from a post-translocation (POST) complex to a pre-translocation (PRE) complex, thus giving elongation factor G a second chance to translocate the tRNAs correctly. Binds to ribosomes in a GTP-dependent manner. This Pelobacter propionicus (strain DSM 2379 / NBRC 103807 / OttBd1) protein is Elongation factor 4.